We begin with the raw amino-acid sequence, 340 residues long: Phenylalanine--tRNA ligase alpha subunit (340 aa).

Glu255 provides a ligand contact to Mg(2+).

Belongs to the class-II aminoacyl-tRNA synthetase family. Phe-tRNA synthetase alpha subunit type 1 subfamily. Tetramer of two alpha and two beta subunits. Requires Mg(2+) as cofactor.

Its subcellular location is the cytoplasm. It catalyses the reaction tRNA(Phe) + L-phenylalanine + ATP = L-phenylalanyl-tRNA(Phe) + AMP + diphosphate + H(+). This Exiguobacterium sibiricum (strain DSM 17290 / CCUG 55495 / CIP 109462 / JCM 13490 / 255-15) protein is Phenylalanine--tRNA ligase alpha subunit.